Here is a 187-residue protein sequence, read N- to C-terminus: NADH-quinone oxidoreductase subunit B (187 aa).

Positions 1-10 are enriched in basic and acidic residues; sequence MTADHNRALH. Positions 1-22 are disordered; the sequence is MTADHNRALHDAPTARGGEVRQ. [4Fe-4S] cluster is bound by residues Cys66, Cys67, Cys131, and Cys161.

The protein belongs to the complex I 20 kDa subunit family. As to quaternary structure, NDH-1 is composed of 14 different subunits. Subunits NuoB, C, D, E, F, and G constitute the peripheral sector of the complex. Requires [4Fe-4S] cluster as cofactor.

Its subcellular location is the cell inner membrane. It carries out the reaction a quinone + NADH + 5 H(+)(in) = a quinol + NAD(+) + 4 H(+)(out). In terms of biological role, NDH-1 shuttles electrons from NADH, via FMN and iron-sulfur (Fe-S) centers, to quinones in the respiratory chain. Couples the redox reaction to proton translocation (for every two electrons transferred, four hydrogen ions are translocated across the cytoplasmic membrane), and thus conserves the redox energy in a proton gradient. The sequence is that of NADH-quinone oxidoreductase subunit B from Erythrobacter litoralis (strain HTCC2594).